The primary structure comprises 482 residues: tRNA sulfurtransferase (482 aa).

The THUMP domain maps to Val-61–Arg-165. ATP contacts are provided by residues Leu-183–Ile-184, Lys-265, Gly-287, and Gln-296. Cys-344 and Cys-456 are oxidised to a cystine. A Rhodanese domain is found at Phe-404–Pro-482. Catalysis depends on Cys-456, which acts as the Cysteine persulfide intermediate.

Belongs to the ThiI family.

The protein localises to the cytoplasm. The enzyme catalyses [ThiI sulfur-carrier protein]-S-sulfanyl-L-cysteine + a uridine in tRNA + 2 reduced [2Fe-2S]-[ferredoxin] + ATP + H(+) = [ThiI sulfur-carrier protein]-L-cysteine + a 4-thiouridine in tRNA + 2 oxidized [2Fe-2S]-[ferredoxin] + AMP + diphosphate. It carries out the reaction [ThiS sulfur-carrier protein]-C-terminal Gly-Gly-AMP + S-sulfanyl-L-cysteinyl-[cysteine desulfurase] + AH2 = [ThiS sulfur-carrier protein]-C-terminal-Gly-aminoethanethioate + L-cysteinyl-[cysteine desulfurase] + A + AMP + 2 H(+). It functions in the pathway cofactor biosynthesis; thiamine diphosphate biosynthesis. Its function is as follows. Catalyzes the ATP-dependent transfer of a sulfur to tRNA to produce 4-thiouridine in position 8 of tRNAs, which functions as a near-UV photosensor. Also catalyzes the transfer of sulfur to the sulfur carrier protein ThiS, forming ThiS-thiocarboxylate. This is a step in the synthesis of thiazole, in the thiamine biosynthesis pathway. The sulfur is donated as persulfide by IscS. This is tRNA sulfurtransferase from Photorhabdus laumondii subsp. laumondii (strain DSM 15139 / CIP 105565 / TT01) (Photorhabdus luminescens subsp. laumondii).